Here is a 614-residue protein sequence, read N- to C-terminus: Probable glycerol-3-phosphate dehydrogenase (614 aa).

Residue 57 to 85 (DLVVVGGGSTGAGCALDGATRGLKVALVD) coordinates FAD. The tract at residues 595 to 614 (MECPEEKRHRGERRLPPQEK) is disordered. The segment covering 598–614 (PEEKRHRGERRLPPQEK) has biased composition (basic and acidic residues).

Belongs to the FAD-dependent glycerol-3-phosphate dehydrogenase family. The cofactor is FAD.

It is found in the cytoplasm. It catalyses the reaction a quinone + sn-glycerol 3-phosphate = dihydroxyacetone phosphate + a quinol. Its pathway is polyol metabolism; glycerol degradation via glycerol kinase pathway; glycerone phosphate from sn-glycerol 3-phosphate (anaerobic route): step 1/1. This chain is Probable glycerol-3-phosphate dehydrogenase, found in Encephalitozoon cuniculi (strain GB-M1) (Microsporidian parasite).